A 950-amino-acid polypeptide reads, in one-letter code: Translation initiation factor IF-2 (950 aa).

Disordered regions lie at residues 69–92 and 128–352; these read KTKTVPETAKSKQEDHPRTFAGKA and KPKV…SNVP. Basic and acidic residues-rich tracts occupy residues 77–86, 128–158, 165–186, 200–234, and 291–312; these read AKSKQEDHPR, KPKVAEPVKKSEPKAAAKAEETKVEKVEAKA, AEVKTENVADKKEPVVTEEKKK, KRAEDIKKEQAAARPEKKKFDKNRNDRNNRNDNRR, and NRRDRDRKKTDSNRDNTKDGNR. Polar residues-rich tracts occupy residues 322 to 336 and 343 to 352; these read NRNQVRNARNSNWNQ and YQNNQSSNVP. Residues 448 to 619 form the tr-type G domain; that stretch reads ERPAVVTIMG…LLVAEVQELK (172 aa). A G1 region spans residues 457–464; that stretch reads GHVDHGKT. Position 457 to 464 (457 to 464) interacts with GTP; sequence GHVDHGKT. Residues 482 to 486 are G2; that stretch reads GITQH. The tract at residues 503–506 is G3; sequence DTPG. Residues 503-507 and 557-560 each bind GTP; these read DTPGH and NKID. Residues 557-560 form a G4 region; that stretch reads NKID. Residues 595–597 are G5; that stretch reads SAK.

The protein belongs to the TRAFAC class translation factor GTPase superfamily. Classic translation factor GTPase family. IF-2 subfamily.

It is found in the cytoplasm. Its function is as follows. One of the essential components for the initiation of protein synthesis. Protects formylmethionyl-tRNA from spontaneous hydrolysis and promotes its binding to the 30S ribosomal subunits. Also involved in the hydrolysis of GTP during the formation of the 70S ribosomal complex. In Lactococcus lactis subsp. cremoris (strain SK11), this protein is Translation initiation factor IF-2.